The sequence spans 638 residues: Growth hormone receptor (638 aa).

The first 18 residues, 1–18, serve as a signal peptide directing secretion; the sequence is MDLWQLLLTVALAGSSDA. Over 19 to 264 the chain is Extracellular; the sequence is FSGSEATPAT…SPFTCEEDFR (246 aa). Positions 30–51 are disordered; it reads GRASESVQRVHPGLGTNSSGKP. N46 carries an N-linked (GlcNAc...) asparagine glycan. Disulfide bonds link C56–C66 and C101–C112. N115 carries an N-linked (GlcNAc...) asparagine glycan. Cysteines 126 and 140 form a disulfide. Residues 151 to 254 enclose the Fibronectin type-III domain; the sequence is PPIGLNWTLL…EVLYVTLPQM (104 aa). Residues N156, N161, and N200 are each glycosylated (N-linked (GlcNAc...) asparagine). The short motif at 240 to 244 is the WSXWS motif element; it reads YGEFS. The tract at residues 260–262 is required for ADAM17-mediated proteolysis; it reads EED. A helical membrane pass occupies residues 265-288; the sequence is FPWFLIIIFGIFGLTVMLFVFIFS. Residues 289–638 are Cytoplasmic-facing; the sequence is KQQRIKMLIL…STDQLNKILP (350 aa). The interval 294–379 is required for JAK2 binding; the sequence is KMLILPPVPV…HQKSLSVLAA (86 aa). The Box 1 motif signature appears at 297–305; it reads ILPPVPVPK. A UbE motif motif is present at residues 340-349; it reads DSWVEFIELD. S341 bears the Phosphoserine mark. Y487 carries the phosphotyrosine modification. A disordered region spans residues 573–592; that stretch reads TTTAERSGTAEDAPGSEMPV. Y595 carries the phosphotyrosine modification.

Belongs to the type I cytokine receptor family. Type 1 subfamily. As to quaternary structure, on growth hormone (GH) binding, forms homodimers and binds JAK2 via a box 1-containing domain. Post-translationally, the soluble form (GHBP) is produced by phorbol ester-promoted proteolytic cleavage at the cell surface (shedding) by ADAM17/TACE. Shedding is inhibited by growth hormone (GH) binding to the receptor probably due to a conformational change in GHR rendering the receptor inaccessible to ADAM17. In terms of processing, on GH binding, phosphorylated on tyrosine residues in the cytoplasmic domain by JAK2. Ubiquitinated by the ECS(SOCS2) complex following ligand-binding and phosphorylation by JAK2, leading to its degradation by the proteasome. Regulation by the ECS(SOCS2) complex acts as a negative feedback loop of growth hormone receptor signaling. Ubiquitination is not sufficient for GHR internalization.

The protein resides in the cell membrane. The protein localises to the secreted. Functionally, receptor for pituitary gland growth hormone involved in regulating postnatal body growth. On ligand binding, couples to, and activates the JAK2/STAT5 pathway. Its function is as follows. The soluble form acts as a reservoir of growth hormone in plasma and may be a modulator/inhibitor of GH signaling. This chain is Growth hormone receptor, found in Oryctolagus cuniculus (Rabbit).